The sequence spans 387 residues: Growth-regulating factor 3 (387 aa).

A QLQ domain is found at 53–88 (PFTAAQYEELEQQALIYKYLVAGVPVPADLLLPIRR). 2 short sequence motifs (bipartite nuclear localization signal) span residues 111–129 (KKLD…KKWR) and 147–154 (RGRNRSRK). In terms of domain architecture, WRC spans 114–158 (DPEPGRCRRTDGKKWRCSKEAAPDSKYCERHMHRGRNRSRKPVEA). The segment at 145-176 (MHRGRNRSRKPVEAQLVAPHSQPPATAPAAAV) is disordered.

This sequence belongs to the GRF family.

The protein localises to the nucleus. Transcription activator that plays a regulatory role in gibberellin-induced stem elongation. The protein is Growth-regulating factor 3 (GRF3) of Oryza sativa subsp. japonica (Rice).